The chain runs to 900 residues: Probable beta-mannosidase (900 aa).

A signal peptide spans 1 to 21; sequence MRTSLVVCLFWLLFQLHTTHG. Residues N38, N42, and N131 are each glycosylated (N-linked (GlcNAc...) asparagine). E463 acts as the Proton donor in catalysis. Residues N477, N576, N661, and N738 are each glycosylated (N-linked (GlcNAc...) asparagine).

The protein belongs to the glycosyl hydrolase 2 family.

The protein localises to the lysosome. It carries out the reaction Hydrolysis of terminal, non-reducing beta-D-mannose residues in beta-D-mannosides.. This Caenorhabditis elegans protein is Probable beta-mannosidase.